The primary structure comprises 505 residues: Midnolin (505 aa).

Residues 32-106 (MSLAIHSTTG…LTLVPTVEAG (75 aa)) enclose the Ubiquitin-like domain. 3 disordered regions span residues 155–176 (PWHR…VSDF), 228–305 (SIAT…SRKP), and 440–485 (RLRR…GLDF). Positions 238-262 (RPVSSAARVPPVSSSPSSPVSPSPV) are enriched in low complexity. The span at 263-282 (TAGTFQSHAASTTCPEQTDC) shows a compositional bias: polar residues. Residues 283–300 (SPPASSNTTSTPGSSPTP) are compositionally biased toward low complexity.

In terms of assembly, interacts with GCK; the interaction occurs preferentially at low glucose levels. Interacts with the proteasome.

The protein localises to the nucleus. Its subcellular location is the cytoplasm. It is found in the cytosol. It localises to the nucleolus. Its function is as follows. Facilitates the ubiquitin-independent proteasomal degradation of stimulus-induced transcription factors such as FOSB, EGR1, NR4A1, and IRF4 to the proteasome for degradation. Promotes also the degradation of other substrates such as CBX4. Plays a role in inhibiting the activity of glucokinase GCK and both glucose-induced and basal insulin secretion. In Rattus norvegicus (Rat), this protein is Midnolin.